Consider the following 439-residue polypeptide: Xylose isomerase (439 aa).

Active-site residues include histidine 103 and aspartate 106. Residues glutamate 234, glutamate 270, histidine 273, aspartate 298, aspartate 309, aspartate 311, and aspartate 341 each coordinate Mg(2+).

Belongs to the xylose isomerase family. Homotetramer. The cofactor is Mg(2+).

It localises to the cytoplasm. It catalyses the reaction alpha-D-xylose = alpha-D-xylulofuranose. This is Xylose isomerase from Bacteroides fragilis (strain YCH46).